Here is a 429-residue protein sequence, read N- to C-terminus: Adenylosuccinate synthetase (429 aa).

GTP contacts are provided by residues 12–18 and 40–42; these read GDEGKGK and GHT. D13 acts as the Proton acceptor in catalysis. Mg(2+)-binding residues include D13 and G40. Residues 13 to 16, 38 to 41, T128, R142, Q223, T238, and R302 contribute to the IMP site; these read DEGK and NAGH. H41 acts as the Proton donor in catalysis. 298–304 serves as a coordination point for substrate; the sequence is TTTGRPR. GTP-binding positions include R304, 330–332, and 412–414; these read SID and SVG.

Belongs to the adenylosuccinate synthetase family. As to quaternary structure, homodimer. The cofactor is Mg(2+).

The protein localises to the cytoplasm. It catalyses the reaction IMP + L-aspartate + GTP = N(6)-(1,2-dicarboxyethyl)-AMP + GDP + phosphate + 2 H(+). Its pathway is purine metabolism; AMP biosynthesis via de novo pathway; AMP from IMP: step 1/2. Plays an important role in the de novo pathway of purine nucleotide biosynthesis. Catalyzes the first committed step in the biosynthesis of AMP from IMP. The sequence is that of Adenylosuccinate synthetase from Bacillus cereus (strain ZK / E33L).